We begin with the raw amino-acid sequence, 648 residues long: Probable alpha-galactosidase D (648 aa).

Positions 1 to 17 are cleaved as a signal peptide; sequence MESIVWLLLLSPALVAG. N-linked (GlcNAc...) asparagine glycosylation is found at asparagine 84 and asparagine 90. Residues cysteine 123 and cysteine 156 are joined by a disulfide bond. Residue aspartate 154 is the Nucleophile of the active site. Residue 199–203 coordinates substrate; the sequence is EWGID. Aspartate 221 acts as the Proton donor in catalysis. Residues asparagine 339, asparagine 505, and asparagine 572 are each glycosylated (N-linked (GlcNAc...) asparagine).

This sequence belongs to the glycosyl hydrolase 27 family.

It localises to the secreted. The enzyme catalyses Hydrolysis of terminal, non-reducing alpha-D-galactose residues in alpha-D-galactosides, including galactose oligosaccharides, galactomannans and galactolipids.. In terms of biological role, hydrolyzes a variety of simple alpha-D-galactoside as well as more complex molecules such as oligosaccharides and polysaccharides. The sequence is that of Probable alpha-galactosidase D (aglD) from Neosartorya fischeri (strain ATCC 1020 / DSM 3700 / CBS 544.65 / FGSC A1164 / JCM 1740 / NRRL 181 / WB 181) (Aspergillus fischerianus).